A 379-amino-acid polypeptide reads, in one-letter code: Queuine tRNA-ribosyltransferase (379 aa).

Asp-95 serves as the catalytic Proton acceptor. Residues Asp-95–Phe-99, Asp-149, Gln-197, and Gly-224 contribute to the substrate site. Positions Gly-255–Glu-261 are RNA binding. The active-site Nucleophile is the Asp-274. Residues Cys-312, Cys-314, Cys-317, and His-343 each contribute to the Zn(2+) site.

It belongs to the queuine tRNA-ribosyltransferase family. As to quaternary structure, homodimer. Within each dimer, one monomer is responsible for RNA recognition and catalysis, while the other monomer binds to the replacement base PreQ1. Zn(2+) is required as a cofactor.

The enzyme catalyses 7-aminomethyl-7-carbaguanine + guanosine(34) in tRNA = 7-aminomethyl-7-carbaguanosine(34) in tRNA + guanine. It functions in the pathway tRNA modification; tRNA-queuosine biosynthesis. Catalyzes the base-exchange of a guanine (G) residue with the queuine precursor 7-aminomethyl-7-deazaguanine (PreQ1) at position 34 (anticodon wobble position) in tRNAs with GU(N) anticodons (tRNA-Asp, -Asn, -His and -Tyr). Catalysis occurs through a double-displacement mechanism. The nucleophile active site attacks the C1' of nucleotide 34 to detach the guanine base from the RNA, forming a covalent enzyme-RNA intermediate. The proton acceptor active site deprotonates the incoming PreQ1, allowing a nucleophilic attack on the C1' of the ribose to form the product. After dissociation, two additional enzymatic reactions on the tRNA convert PreQ1 to queuine (Q), resulting in the hypermodified nucleoside queuosine (7-(((4,5-cis-dihydroxy-2-cyclopenten-1-yl)amino)methyl)-7-deazaguanosine). The protein is Queuine tRNA-ribosyltransferase of Solibacter usitatus (strain Ellin6076).